The primary structure comprises 390 residues: MGDTFIRHIALLGFEKRFVPSQHYVYMFLVKWQDLSEKVVYRRFTEIYEFHKTLKEMFPIEAGAINPENRIIPHLPAPKWFDGQRAAENRQGTLTEYCSTLMSLPTKISRCPHLLDFFKVRPDDLKLPTDNQTKKPETYLMPKDGKSTATDITGPIILQTYRAIANYEKTSGSEMALSTGDVVEVVEKSESGWWFCQMKAKRGWIPASFLEPLDSPDETEDPEPNYAGEPYVAIKAYTAVEGDEVSLLEGEAVEVIHKLLDGWWVIRKDDVTGYFPSMYLQKSGQDVSQAQRQIKRGAPPRRSSIRNAHSIHQRSRKRLSQDAYRRNSVRFLQQRRRQARPGPQSPGSPLEEERQTQRSKPQPAVPPRPSADLILNRCSESTKRKLASAV.

A PX domain is found at 4-125 (TFIRHIALLG…DFFKVRPDDL (122 aa)). 2 consecutive SH3 domains span residues 156–215 (IILQ…PLDS) and 226–285 (YAGE…KSGQ). Positions 285–390 (QDVSQAQRQI…STKRKLASAV (106 aa)) are disordered. Phosphoserine is present on residues serine 303 and serine 304. Residues 309–318 (HSIHQRSRKR) are compositionally biased toward basic residues. 4 positions are modified to phosphoserine: serine 320, serine 328, serine 345, and serine 348.

As to quaternary structure, component of the phagocyte NADPH oxidase complex composed of an obligatory core heterodimer formed by the membrane proteins CYBA and CYBB and the cytosolic regulatory subunits NCF1/p47-phox, NCF2/p67-phox, NCF4/p40-phox and the small GTPase RAC1 or RAC2. Part of a cytosolic complex composed at least by NCF1, NCF2 and NCF4. Interacts (via C-terminus) with NCF2 (via the C-terminal SH3 domain). Interacts with NCF4. Interacts with CYBB. Interacts (via the second SH3 domain) with CYBA; interaction is phosphorylation-dependent. Interacts with NOXA1. Interacts with ADAM15. Interacts with TRAF4. Interacts with FASLG. Interacts with PARK7 (via C-terminus); the interaction is enhanced by LPS and modulates NCF1 phosphorylation and membrane translocation. Phosphorylated by PRKCD; phosphorylation induces activation of NCF1, leading to assembly and activation of the NADPH oxidase complex. In terms of tissue distribution, detected in peripheral blood monocytes and neutrophils (at protein level).

The protein resides in the cytoplasm. The protein localises to the cytosol. It localises to the membrane. Its function is as follows. Subunit of the phagocyte NADPH oxidase complex that mediates the transfer of electrons from cytosolic NADPH to O2 to produce the superoxide anion (O2(-)). In the activated complex, electrons are first transferred from NADPH to flavin adenine dinucleotide (FAD) and subsequently transferred via two heme molecules to molecular oxygen, producing superoxide through an outer-sphere reaction. Activation of the NADPH oxidase complex is initiated by the assembly of cytosolic subunits of the NADPH oxidase complex with the core NADPH oxidase complex to form a complex at the plasma membrane or phagosomal membrane. This activation process is initiated by phosphorylation dependent binding of the cytosolic NCF1/p47-phox subunit to the C-terminus of CYBA/p22-phox. This is Neutrophil cytosol factor 1 from Homo sapiens (Human).